Reading from the N-terminus, the 594-residue chain is Shugoshin (594 aa).

A coiled-coil region spans residues 38–61 (KITDMETKVSELVQENVSLRSRLS). Disordered regions lie at residues 104–178 (SGIH…KSSR), 201–266 (QLPI…TNKN), 342–380 (SKIK…RRTR), and 519–549 (TKQQ…RTKQ). Residues 220-240 (EEESQENKHTKEEREDEGKEN) are a coiled coil. Residues 224-239 (QENKHTKEEREDEGKE) show a composition bias toward basic and acidic residues. Residues 252–261 (SVTNTGTECS) are compositionally biased toward polar residues. Basic residues predominate over residues 343-355 (KIKHSMKHPRTKL). The segment covering 357–376 (GGQDDIMPHTDYDKDDEKRE) has biased composition (basic and acidic residues). Polar residues-rich tracts occupy residues 519-532 (TKQQ…SDPN) and 539-549 (NSNVKPTRTKQ).

Belongs to the shugoshin family.

The protein resides in the nucleus. It localises to the chromosome. It is found in the centromere. Its function is as follows. Plays a central role in chromosome cohesion during cell division by preventing premature dissociation of cohesin complex from centromeres after prophase, when most of cohesin complex dissociates from chromosomes arms. This Kluyveromyces lactis (strain ATCC 8585 / CBS 2359 / DSM 70799 / NBRC 1267 / NRRL Y-1140 / WM37) (Yeast) protein is Shugoshin (SGO1).